A 131-amino-acid polypeptide reads, in one-letter code: Holo-[acyl-carrier-protein] synthase (131 aa).

Mg(2+) is bound by residues Asp-8 and Glu-59.

Belongs to the P-Pant transferase superfamily. AcpS family. Requires Mg(2+) as cofactor.

It localises to the cytoplasm. The catalysed reaction is apo-[ACP] + CoA = holo-[ACP] + adenosine 3',5'-bisphosphate + H(+). Transfers the 4'-phosphopantetheine moiety from coenzyme A to a Ser of acyl-carrier-protein. The sequence is that of Holo-[acyl-carrier-protein] synthase from Rickettsia massiliae (strain Mtu5).